The sequence spans 616 residues: Chaperone protein HscA (616 aa).

The protein belongs to the heat shock protein 70 family.

In terms of biological role, chaperone involved in the maturation of iron-sulfur cluster-containing proteins. Has a low intrinsic ATPase activity which is markedly stimulated by HscB. Involved in the maturation of IscU. The polypeptide is Chaperone protein HscA (Salmonella arizonae (strain ATCC BAA-731 / CDC346-86 / RSK2980)).